The sequence spans 149 residues: Large ribosomal subunit protein bL9 (149 aa).

It belongs to the bacterial ribosomal protein bL9 family.

In terms of biological role, binds to the 23S rRNA. This Bacillus velezensis (strain DSM 23117 / BGSC 10A6 / LMG 26770 / FZB42) (Bacillus amyloliquefaciens subsp. plantarum) protein is Large ribosomal subunit protein bL9.